A 141-amino-acid polypeptide reads, in one-letter code: Hemoglobin subunit alpha-D (141 aa).

Residues methionine 1–arginine 141 form the Globin domain. The heme b site is built by histidine 58 and histidine 87.

The protein belongs to the globin family. As to quaternary structure, heterotetramer of two alpha-D chains and two beta chains. Red blood cells.

In terms of biological role, involved in oxygen transport from the lung to the various peripheral tissues. This chain is Hemoglobin subunit alpha-D (HBAD), found in Chelonoidis carbonarius (Red-footed tortoise).